Consider the following 271-residue polypeptide: 3-deoxy-manno-octulosonate cytidylyltransferase (271 aa).

This sequence belongs to the KdsB family.

Its subcellular location is the cytoplasm. The enzyme catalyses 3-deoxy-alpha-D-manno-oct-2-ulosonate + CTP = CMP-3-deoxy-beta-D-manno-octulosonate + diphosphate. Its pathway is nucleotide-sugar biosynthesis; CMP-3-deoxy-D-manno-octulosonate biosynthesis; CMP-3-deoxy-D-manno-octulosonate from 3-deoxy-D-manno-octulosonate and CTP: step 1/1. The protein operates within bacterial outer membrane biogenesis; lipopolysaccharide biosynthesis. Its function is as follows. Activates KDO (a required 8-carbon sugar) for incorporation into bacterial lipopolysaccharide in Gram-negative bacteria. The polypeptide is 3-deoxy-manno-octulosonate cytidylyltransferase (Leptothrix cholodnii (strain ATCC 51168 / LMG 8142 / SP-6) (Leptothrix discophora (strain SP-6))).